The chain runs to 203 residues: uncharacterized protein (203 aa).

A disordered region spans residues 117–138 (SSDPKLKQPSNCLNDQTNNDSA). Polar residues predominate over residues 124-138 (QPSNCLNDQTNNDSA).

Its subcellular location is the cytoplasm. It is found in the nucleus. This is an uncharacterized protein from Schizosaccharomyces pombe (strain 972 / ATCC 24843) (Fission yeast).